The chain runs to 675 residues: DNA ligase (675 aa).

NAD(+) is bound by residues 35–39 (DEAYD), 84–85 (SL), and Glu-116. Residue Lys-118 is the N6-AMP-lysine intermediate of the active site. 4 residues coordinate NAD(+): Arg-139, Glu-180, Lys-296, and Lys-320. The Zn(2+) site is built by Cys-414, Cys-417, Cys-432, and Cys-437. The 79-residue stretch at 597–675 (PVDAFWNGKT…EREFLERLGM (79 aa)) folds into the BRCT domain.

It belongs to the NAD-dependent DNA ligase family. LigA subfamily. Mg(2+) serves as cofactor. The cofactor is Mn(2+).

It catalyses the reaction NAD(+) + (deoxyribonucleotide)n-3'-hydroxyl + 5'-phospho-(deoxyribonucleotide)m = (deoxyribonucleotide)n+m + AMP + beta-nicotinamide D-nucleotide.. In terms of biological role, DNA ligase that catalyzes the formation of phosphodiester linkages between 5'-phosphoryl and 3'-hydroxyl groups in double-stranded DNA using NAD as a coenzyme and as the energy source for the reaction. It is essential for DNA replication and repair of damaged DNA. This is DNA ligase from Syntrophobacter fumaroxidans (strain DSM 10017 / MPOB).